Here is a 308-residue protein sequence, read N- to C-terminus: 4-hydroxy-tetrahydrodipicolinate synthase (308 aa).

Thr-53 contributes to the pyruvate binding site. The Proton donor/acceptor role is filled by Tyr-141. Lys-169 acts as the Schiff-base intermediate with substrate in catalysis. Val-209 is a binding site for pyruvate.

This sequence belongs to the DapA family. Homotetramer; dimer of dimers.

It localises to the cytoplasm. The enzyme catalyses L-aspartate 4-semialdehyde + pyruvate = (2S,4S)-4-hydroxy-2,3,4,5-tetrahydrodipicolinate + H2O + H(+). Its pathway is amino-acid biosynthesis; L-lysine biosynthesis via DAP pathway; (S)-tetrahydrodipicolinate from L-aspartate: step 3/4. In terms of biological role, catalyzes the condensation of (S)-aspartate-beta-semialdehyde [(S)-ASA] and pyruvate to 4-hydroxy-tetrahydrodipicolinate (HTPA). The sequence is that of 4-hydroxy-tetrahydrodipicolinate synthase from Acidothermus cellulolyticus (strain ATCC 43068 / DSM 8971 / 11B).